The following is a 283-amino-acid chain: Lolitrem B biosynthesis cluster protein S (283 aa).

The signal sequence occupies residues M1–G27. 5 helical membrane-spanning segments follow: residues W73–L93, L112–I132, I157–L177, M219–A239, and V250–L270.

It belongs to the ltmS family.

It localises to the membrane. In terms of biological role, part of the gene cluster that mediates the biosynthesis of lolitrems, indole-diterpene mycotoxins that are potent tremorgens in mammals, and are synthesized by clavicipitaceous fungal endophytes in association with their grass hosts. The geranylgeranyl diphosphate (GGPP) synthase ltmG is proposed to catalyze the first step in lolitrem biosynthesis. LtmG catalyzes a series of iterative condensations of isopentenyl diphosphate (IPP) with dimethylallyl diphosphate (DMAPP), geranyl diphosphate (GPP), and farnesyl diphosphate (FPP), to form GGPP. GGPP then condenses with indole-3-glycerol phosphate to form 3-geranylgeranylindole, an acyclic intermediate, to be incorporated into paxilline. Either ltmG or ltmC could be responsible for this step, as both are putative prenyl transferases. The FAD-dependent monooxygenase ltmM then catalyzes the epoxidation of the two terminal alkenes of the geranylgeranyl moiety, which is subsequently cyclized by ltmB, to paspaline. The cytochrome P450 monooxygenases ltmQ and ltmP can sequentially oxidize paspaline to terpendole E and terpendole F. Alternatively, ltmP converts paspaline to an intermediate which is oxidized by ltmQ to terpendole F. LtmF, ltmK, ltmE and ltmJ appear to be unique to the epichloe endophytes. The prenyltransferase ltmF is involved in the 27-hydroxyl-O-prenylation. The cytochrome P450 monooxygenase ltmK is required for the oxidative acetal ring formation. The multi-functional prenyltransferase ltmE is required for C20- and C21-prenylations of the indole ring of paspalanes and acts together with the cytochrome P450 monooxygenase ltmJ to yield lolitremanes by multiple oxidations and ring closures. The stereoisomer pairs of lolitriol and lolitrem N or lolitrem B and lolitrem F may be attributed to variations in the way in which ring closure can occur under the action of ltmJ. While the major product of this pathway is lolitrem B, the prenyl transferases and cytochrome P450 monooxygenases identified in this pathway have a remarkable versatility in their regio- and stereo-specificities to generate a diverse range of metabolites that are products of a metabolic grid rather than a linear pathway. The polypeptide is Lolitrem B biosynthesis cluster protein S (Epichloe festucae (strain Fl1)).